A 321-amino-acid chain; its full sequence is Beta-ketoacyl-[acyl-carrier-protein] synthase III (321 aa).

Catalysis depends on residues Cys113 and His246. The interval 247-251 (QANVR) is ACP-binding. Asn276 is an active-site residue.

The protein belongs to the thiolase-like superfamily. FabH family. As to quaternary structure, homodimer.

It localises to the cytoplasm. The catalysed reaction is malonyl-[ACP] + acetyl-CoA + H(+) = 3-oxobutanoyl-[ACP] + CO2 + CoA. The protein operates within lipid metabolism; fatty acid biosynthesis. Functionally, catalyzes the condensation reaction of fatty acid synthesis by the addition to an acyl acceptor of two carbons from malonyl-ACP. Catalyzes the first condensation reaction which initiates fatty acid synthesis and may therefore play a role in governing the total rate of fatty acid production. Possesses both acetoacetyl-ACP synthase and acetyl transacylase activities. Its substrate specificity determines the biosynthesis of branched-chain and/or straight-chain of fatty acids. The sequence is that of Beta-ketoacyl-[acyl-carrier-protein] synthase III from Enterococcus faecalis (strain ATCC 700802 / V583).